Consider the following 237-residue polypeptide: Sugar fermentation stimulation protein homolog (237 aa).

This sequence belongs to the SfsA family.

The sequence is that of Sugar fermentation stimulation protein homolog from Pseudomonas syringae pv. syringae (strain B728a).